The chain runs to 281 residues: CCAAT/enhancer-binding protein epsilon (281 aa).

The tract at residues Met-1 to Leu-30 is disordered. A Glycyl lysine isopeptide (Lys-Gly) (interchain with G-Cter in SUMO2) cross-link involves residue Lys-121. Ser-181 carries the post-translational modification Phosphoserine. Residues Ser-204–Ile-267 form the bZIP domain. Residues Arg-208–Arg-245 form a basic motif region. The segment at Leu-246–Ile-267 is leucine-zipper.

It belongs to the bZIP family. C/EBP subfamily. As to quaternary structure, binds DNA as a homodimer and as a heterodimer. Can form stable heterodimers with CEBPA, CEBPB and CEBPD. Interacts with GATA1 and SPI1. Interacts with SMARCD2. In terms of processing, phosphorylated.

It localises to the nucleus. In terms of biological role, transcriptional activator. C/EBP are DNA-binding proteins that recognize two different motifs: the CCAAT homology common to many promoters and the enhanced core homology common to many enhancers. Required for the promyelocyte-myelocyte transition in myeloid differentiation. The protein is CCAAT/enhancer-binding protein epsilon (Cebpe) of Mus musculus (Mouse).